The chain runs to 854 residues: Protein asteroid (854 aa).

Positions 368-427 (SEEECSDDEHSSSSDEKFSDVEEGEDQEEADNQDEEQQEENQDVDSGDEEEEEADEGLEL) are disordered. Basic and acidic residues predominate over residues 375-387 (DEHSSSSDEKFSD). A compositionally biased stretch (acidic residues) spans 388–427 (VEEGEDQEEADNQDEEQQEENQDVDSGDEEEEEADEGLEL).

It belongs to the asteroid family. Expressed in the proliferative tissues of embryos and in the mitotically active tissue anterior to the morphogenetic furrow in eye imaginal disks.

Functionally, may function in EGF receptor signaling. May play a role in compound eye morphogenesis. The sequence is that of Protein asteroid (ast) from Drosophila melanogaster (Fruit fly).